A 132-amino-acid polypeptide reads, in one-letter code: Small ribosomal subunit protein uS11 (132 aa).

It belongs to the universal ribosomal protein uS11 family. As to quaternary structure, part of the 30S ribosomal subunit.

Located on the platform of the 30S subunit. The protein is Small ribosomal subunit protein uS11 of Sulfolobus acidocaldarius (strain ATCC 33909 / DSM 639 / JCM 8929 / NBRC 15157 / NCIMB 11770).